The chain runs to 211 residues: Guanylate kinase (211 aa).

One can recognise a Guanylate kinase-like domain in the interval 5 to 184; sequence GLLIVFSGPS…AAERVKRIIE (180 aa). 12 to 19 is a binding site for ATP; sequence GPSGVGKG.

The protein belongs to the guanylate kinase family.

The protein localises to the cytoplasm. It carries out the reaction GMP + ATP = GDP + ADP. In terms of biological role, essential for recycling GMP and indirectly, cGMP. This is Guanylate kinase from Streptococcus pyogenes serotype M1.